Reading from the N-terminus, the 208-residue chain is Redox-sensing transcriptional repressor Rex (208 aa).

Residues 15–54 (SYYMCLERLLDEGVEVVSSEELARRLDLKASQIRKDLSYF) constitute a DNA-binding region (H-T-H motif). Position 89-94 (89-94 (GAGNIG)) interacts with NAD(+).

Belongs to the transcriptional regulatory Rex family. In terms of assembly, homodimer.

The protein localises to the cytoplasm. Functionally, modulates transcription in response to changes in cellular NADH/NAD(+) redox state. The sequence is that of Redox-sensing transcriptional repressor Rex from Thermotoga petrophila (strain ATCC BAA-488 / DSM 13995 / JCM 10881 / RKU-1).